Reading from the N-terminus, the 408-residue chain is DNA primase DnaG (408 aa).

The 76-residue stretch at 166-241 (EEIIIVEGRA…KIDYIARAPP (76 aa)) folds into the Toprim domain. Residues glutamate 172, aspartate 215, and aspartate 217 each contribute to the Mg(2+) site.

Belongs to the archaeal DnaG primase family. In terms of assembly, forms a ternary complex with MCM helicase and DNA. Component of the archaeal exosome complex. Mg(2+) serves as cofactor.

It carries out the reaction ssDNA + n NTP = ssDNA/pppN(pN)n-1 hybrid + (n-1) diphosphate.. Functionally, RNA polymerase that catalyzes the synthesis of short RNA molecules used as primers for DNA polymerase during DNA replication. Also part of the exosome, which is a complex involved in RNA degradation. Acts as a poly(A)-binding protein that enhances the interaction between heteromeric, adenine-rich transcripts and the exosome. This chain is DNA primase DnaG, found in Desulfurococcus amylolyticus (strain DSM 18924 / JCM 16383 / VKM B-2413 / 1221n) (Desulfurococcus kamchatkensis).